Here is a 220-residue protein sequence, read N- to C-terminus: Peritrophin-55 (220 aa).

The N-terminal stretch at 1–19 (MKSVFVCTLVLALAHHAFA) is a signal peptide. Asparagine 29 is a glycosylation site (N-linked (GlcNAc...) asparagine). A Chitin-binding type-2 domain is found at 33 to 95 (ITPCLGNDII…NFIPAPTCEY (63 aa)). Cysteine 68 and cysteine 84 are disulfide-bonded. Residues 116–165 (TTLKTTPSKTTPIVTTAPPSTPVPSTIVTNKPDPTTPKTTKPPKVTTTVN) show a composition bias toward low complexity. The interval 116–220 (TTLKTTPSKT…TPPSIVQLQN (105 aa)) is disordered. Residues 197-210 (PTPPGMPPTPPSFG) show a composition bias toward pro residues.

Post-translationally, glycosylated. Larval peritrophic membrane.

Functionally, may bind oligosaccharide structures. The polypeptide is Peritrophin-55 (Lucilia cuprina (Green bottle fly)).